Consider the following 201-residue polypeptide: Ran-specific GTPase-activating protein 1 (201 aa).

Composition is skewed to basic and acidic residues over residues M1–A17 and K32–E66. The segment at M1 to E66 is disordered. The residue at position 60 (S60) is a Phosphoserine. One can recognise a RanBD1 domain in the interval H64–K200.

It belongs to the RANBP1 family. In terms of assembly, interacts with GSP1 and PRP20.

It is found in the cytoplasm. The protein resides in the nucleus. Functionally, important for the export of protein containing nuclear export signal (NES) out of the nucleus. Stimulates the GTPase activity of GSP1 and GSP2. In Saccharomyces cerevisiae (strain ATCC 204508 / S288c) (Baker's yeast), this protein is Ran-specific GTPase-activating protein 1 (YRB1).